Here is a 375-residue protein sequence, read N- to C-terminus: Alcohol dehydrogenase 4, mitochondrial (375 aa).

The transit peptide at 1–27 directs the protein to the mitochondrion; the sequence is MFRLARAQTALANKASVSRSFLRLNSS. 7 residues coordinate Zn(2+): cysteine 71, histidine 94, cysteine 125, cysteine 128, cysteine 131, cysteine 139, and cysteine 181. NAD(+)-binding positions include 205-211, aspartate 229, lysine 234, 296-298, and arginine 368; these read GAAGGLG and VGL.

This sequence belongs to the zinc-containing alcohol dehydrogenase family. Homotetramer. The cofactor is Zn(2+).

It is found in the mitochondrion matrix. It carries out the reaction a primary alcohol + NAD(+) = an aldehyde + NADH + H(+). The enzyme catalyses a secondary alcohol + NAD(+) = a ketone + NADH + H(+). This Kluyveromyces lactis (strain ATCC 8585 / CBS 2359 / DSM 70799 / NBRC 1267 / NRRL Y-1140 / WM37) (Yeast) protein is Alcohol dehydrogenase 4, mitochondrial (ADH4).